The chain runs to 1407 residues: MASCASIDIEDATQHLRDILKLDRPAGGSNVESQRPSSAYNGDLNGLLVPDPLSSGDGNSTSKPGIRTMPPINLQEKQVICLSGDDSSTCIGILAKEVEIVASSDSSISSKARGSNKVKIQPVAKYDWEQKYYYGNLIAVSNSFLAYAIRAANNGSAMVRVISVSTSERTLLKGFTGSVADLAFAHLNSPQLACLDEAGDLFVWRLALVKGKIQEEILVHIRQPEGTPLNHFRRIIWCPFIPEESEDCCEESSPTVALLHEDRAEVWDLDMLRSSHSTWPVDVSQIKQGFIVVKGHSTCLSEGALSPDGTVLATASHDGFVKFWQIYIEGQDEPRCLHEWKPHDGRPLSCLLFCDNHKKQDPEVPFWRFLITGADQNRELKMWCTVSWTCLQTIRFSPDIFSSVSVPPSLKVCLDLSAEYLILSDVQRKVLYVMELLQNQDEGRACFSSISEFLLTHPVLSFGIQVVSRCRLRHTEVLPAEEESDSLGTESSHGAGTLESAAGVLIKLFCVHTKALQDVQIRFQPQLNPDVVAPLSTHTAHEDFTFGESRPELGSEGLASAPHGSQPDLRRIVELPAPADFLSLSSETKPKLMTPDAFMTPTASLQQISASPSSSSSSSSSSSSSSSSSSSSSLTAVSAVSSSSAMDPSLPSRPPEELTLSPKLQLDGSLTISSSSSLQASPRSLLPGLLPGPADKLIPKGPGQVSSGTSALSLDLQEVEPLGLPQASPSRTRSPDVISSASTALSQDIPEIASEALSRGFGSSVPEGLIEPDSMASAASALHLLSPRPRQGPELSSQLGLDGGPGDGDRHSTPSLLEAALTQEVATSDSQVWPTAPDITRETCSTLTESPRNGLQEKHKSLAFHRPPYHLLQQHDSQDTSAEQSDHDDEVASLASASGGFGSKIPTPRLPAKDWKTKGSPRTSPKLKRKSKKDDGDSAVGSRLTEHQVVEPPEDWPALIWQQQRELAELWHNQEELLQRLCAQLEGLQSTVTDHVERALETRHEQEQRRLERALAEGQQRGGQLQEQLTQQLSQALSSAVAGRLERSIRDEIKKTVPPCVSRSLEPVAGQLSNSVATKLTAVEGSMKENISKLLKSKNLTDAIARAAADTLQGPMQAAYREAFQSVVLPAFEKSCQAMFQQINDSFRLGTQEYLQQLDSHMKSRKAREQEAREPVLAQLRGLVSTLQNATEQMAATVSSSVRAEVQHQLHVAVGSLQESILAQVQRIVKGEVSVALKEQQATVTSSIMQAMRSAAGTPVPSAHLDCQAQQAHILQLLQQGHLNQAFQQALTAADLNLVLYVCETVDPAQVFGQPPCPLSQPVLLSLIQQLASDLGTRSDLKLSYLEEAVMHLDHSDPITRDHMGSVMAQVRQKLFQFLQADPHNSLGKAARRLSLMLHGLVTPSLP.

At Ala2 the chain carries N-acetylalanine. 2 positions are modified to phosphoserine: Ser3 and Ser6. Lys125 carries the N6-acetyllysine modification. 4 WD repeats span residues 174–214 (GFTG…GKIQ), 230–277 (NHFR…SSHS), 295–334 (GHST…QDEP), and 342–393 (PHDG…CLQT). The disordered stretch occupies residues 547–566 (GESRPELGSEGLASAPHGSQ). Phosphoserine occurs at positions 560, 565, 583, and 585. Disordered regions lie at residues 604 to 632 (SLQQ…SSSS) and 673 to 745 (SSSS…STAL). Composition is skewed to low complexity over residues 609 to 632 (SASP…SSSS) and 673 to 693 (SSSS…LPGP). A phosphoserine mark is found at Ser681, Ser713, Ser728, and Ser730. Positions 727-745 (ASPSRTRSPDVISSASTAL) are enriched in polar residues. Thr732 carries the phosphothreonine modification. Phosphoserine occurs at positions 734 and 746. Positions 787–817 (PRPRQGPELSSQLGLDGGPGDGDRHSTPSLL) are disordered. Thr827 is subject to Phosphothreonine. 2 positions are modified to phosphoserine: Ser850 and Ser877. Residues 875–951 (HDSQDTSAEQ…SRLTEHQVVE (77 aa)) are disordered. Thr880 is modified (phosphothreonine). Ser881, Ser885, Ser893, Ser896, and Ser898 each carry phosphoserine. Thr907 is subject to Phosphothreonine. Residues 972 to 1031 (HNQEELLQRLCAQLEGLQSTVTDHVERALETRHEQEQRRLERALAEGQQRGGQLQEQLTQ) adopt a coiled-coil conformation. Ser1386 is modified (phosphoserine).

It belongs to the WD repeat EDC4 family. In terms of assembly, part of a decapping complex consisting of DCP1A, DCP2, EDC3, EDC4 and probably DDX6. Part of a complex consisting of DCP1A, EDC3, EDC4 and DDX6. Part of a complex consisting of DCP1B, EDC3, EDC4 and DDX6. Interacts with DCP2. Interacts with NBDY. Interacts with Tex19.1. Interacts with LSM14A. Interacts with DDX6.

The protein resides in the cytoplasm. Its subcellular location is the P-body. It is found in the nucleus. In terms of biological role, in the process of mRNA degradation, seems to play a role in mRNA decapping. Component of a complex containing DCP2 and DCP1A which functions in decapping of ARE-containing mRNAs. Promotes complex formation between DCP1A and DCP2. Enhances the catalytic activity of DCP2 (in vitro). This Rattus norvegicus (Rat) protein is Enhancer of mRNA-decapping protein 4 (Edc4).